Reading from the N-terminus, the 402-residue chain is MQPSASPGLPLPKYCSVATTVKAPDLHGAVPPWDMSFTCPFATQAPWLATHCTFTRCTACCPCLHTVDRPWPGLRWLGRVGAAGGSWVLARKEPDGFYYLAQIKAAPELEKRGALVVEFEAPLVTGLELPAQQQRVVFPEDVIQFSPSVPHSLQLGDKVLAPWEPGQQRYGPGTVLVGLKKQKGQRASKEKEITVHFWNGKTTKVPLGSVRWVPPTVWKKAVERLQAPHTRDCHSSCLWVPHCSQLGPRAGCTTHRHPLDSSFLCPPCLSCACCQLQCQSSCPLVGPSWWPLTRTSELTTRKLPEPEVKPTAQLLPLQGPKEEPVAELSYNMFSSSSSSSEEENSESHLEMGLPLRQMVSRAVNTDPILSETTSLQQYSPHKPEWRYWRRNGPEPPPGKPGR.

Residues 332-402 (MFSSSSSSSE…PEPPPGKPGR (71 aa)) are disordered. The segment covering 370–379 (SETTSLQQYS) has biased composition (polar residues). Pro residues predominate over residues 393–402 (PEPPPGKPGR).

This is an uncharacterized protein from Mus musculus (Mouse).